The primary structure comprises 173 residues: NADH-ubiquinone oxidoreductase chain 6 (173 aa).

5 helical membrane-spanning segments follow: residues 1–21, 27–47, 48–68, 87–107, and 139–159; these read MTYF…AVAS, YGVV…LSLG, VSFV…VVFV, VVGY…VGGF, and CGVG…FVVL.

It belongs to the complex I subunit 6 family.

It localises to the mitochondrion membrane. The catalysed reaction is a ubiquinone + NADH + 5 H(+)(in) = a ubiquinol + NAD(+) + 4 H(+)(out). Core subunit of the mitochondrial membrane respiratory chain NADH dehydrogenase (Complex I) that is believed to belong to the minimal assembly required for catalysis. Complex I functions in the transfer of electrons from NADH to the respiratory chain. The immediate electron acceptor for the enzyme is believed to be ubiquinone. The polypeptide is NADH-ubiquinone oxidoreductase chain 6 (MT-ND6) (Aethia cristatella (Crested auklet)).